We begin with the raw amino-acid sequence, 110 residues long: UPF0122 protein STER_0914 (110 aa).

This sequence belongs to the UPF0122 family.

Functionally, might take part in the signal recognition particle (SRP) pathway. This is inferred from the conservation of its genetic proximity to ftsY/ffh. May be a regulatory protein. The chain is UPF0122 protein STER_0914 from Streptococcus thermophilus (strain ATCC BAA-491 / LMD-9).